Consider the following 271-residue polypeptide: Large ribosomal subunit protein uL3c (271 aa).

A chloroplast-targeting transit peptide spans 1–49 (MAIAMAVVSFPSLLNKTTLSSSLFTPTFLPAKSSSLLIKSSPKTRFVVS). The disordered stretch occupies residues 190–222 (HGSKSHRALGSIGAGTTPGRVYKGKKMPGRMGG).

The protein belongs to the universal ribosomal protein uL3 family. Part of the 50S ribosomal subunit.

Its subcellular location is the plastid. It is found in the chloroplast. Its function is as follows. One of the primary rRNA binding proteins, it binds directly near the 3'-end of the 23S rRNA, where it nucleates assembly of the 50S subunit. In Arabidopsis thaliana (Mouse-ear cress), this protein is Large ribosomal subunit protein uL3c (RPL3A).